The primary structure comprises 456 residues: Membrane-bound lytic murein transglycosylase F (456 aa).

An N-terminal signal peptide occupies residues 1–22 (MKTWPSRAVSLLLLALALPVGC). A non-LT domain region spans residues 23–267 (SEPPPPVRDP…ALDETWFGRF (245 aa)). Residues 268 to 456 (GDYDYVDVAR…YRALLAAQDL (189 aa)) form an LT domain region. E314 is a catalytic residue.

It in the N-terminal section; belongs to the bacterial solute-binding protein 3 family. This sequence in the C-terminal section; belongs to the transglycosylase Slt family.

It localises to the cell outer membrane. It carries out the reaction Exolytic cleavage of the (1-&gt;4)-beta-glycosidic linkage between N-acetylmuramic acid (MurNAc) and N-acetylglucosamine (GlcNAc) residues in peptidoglycan, from either the reducing or the non-reducing ends of the peptidoglycan chains, with concomitant formation of a 1,6-anhydrobond in the MurNAc residue.. Its function is as follows. Murein-degrading enzyme that degrades murein glycan strands and insoluble, high-molecular weight murein sacculi, with the concomitant formation of a 1,6-anhydromuramoyl product. Lytic transglycosylases (LTs) play an integral role in the metabolism of the peptidoglycan (PG) sacculus. Their lytic action creates space within the PG sacculus to allow for its expansion as well as for the insertion of various structures such as secretion systems and flagella. The polypeptide is Membrane-bound lytic murein transglycosylase F (Maricaulis maris (strain MCS10) (Caulobacter maris)).